We begin with the raw amino-acid sequence, 640 residues long: Endoglucanase 1 (640 aa).

Positions 1–24 (MARRGGAAASSSMANLLGVALVLA) are cleaved as a signal peptide. The active-site Nucleophile is aspartate 94. Residues histidine 433, aspartate 485, and glutamate 494 contribute to the active site. Residues asparagine 528 and asparagine 548 are each glycosylated (N-linked (GlcNAc...) asparagine).

Belongs to the glycosyl hydrolase 9 (cellulase E) family. As to expression, expressed in roots, leaf sheaths and flowers.

It localises to the secreted. The enzyme catalyses Endohydrolysis of (1-&gt;4)-beta-D-glucosidic linkages in cellulose, lichenin and cereal beta-D-glucans.. The protein is Endoglucanase 1 (GLU7) of Oryza sativa subsp. japonica (Rice).